The sequence spans 90 residues: Small ribosomal subunit protein bS20 (90 aa).

A compositionally biased stretch (basic residues) spans 1–11; sequence MAHHKSAKKRI. The tract at residues 1-22 is disordered; it reads MAHHKSAKKRIRQTERRTEVNR. A compositionally biased stretch (basic and acidic residues) spans 12-22; that stretch reads RQTERRTEVNR.

It belongs to the bacterial ribosomal protein bS20 family.

Functionally, binds directly to 16S ribosomal RNA. This is Small ribosomal subunit protein bS20 from Paramagnetospirillum magneticum (strain ATCC 700264 / AMB-1) (Magnetospirillum magneticum).